Reading from the N-terminus, the 545-residue chain is MVTIVLNKYKLLDKIHIGQQKLEDLLFNLKSEVKPIDENNIEIEINADRLDLLSSDGIARSIKGLLEKELGEAKYNVTDTEYTLIVDNVRTRPYALAAVVYNAKIDLEELIQFQEKLHGTIGRKRKKVAIGIHDLRKVDSKTIEYKEVPLSYKFVPLYENKELTISEILEKTEQGKLYGNISIANGVSPAIVQDDGEVLSIPPIINSNKTRLDETTKDFFIDVTGTSFEAVAQTLDIIVSNLAEAGGTIGRVKVLKSANSSQLSSPLFLHKIQNVREEYVKKILGIKTSKEEICKHVMRMRMNCDIENGVIRVTVPQYRVDILNEIDVVEDIAMSIGYNNLEPSKYISTNYGSYDYMTLLERKIRELGIGAGYVEISNFVLIKDEKLFSNKYVKILNPVTDEYNAVRNSLIPGLLDFLSKNQHAKFPIRVFETGDVVVYDSSTDTGFRNDKRAAYAIMDNKVSYEDIQAPIHYILKSLGLEVNYKEENNNIFIEGRSASIFYENEKMGVIGEVNPDVLIRFGIEYPAVIAELYISEIAKRLTNQR.

The region spanning 268–343 (FLHKIQNVRE…MSIGYNNLEP (76 aa)) is the B5 domain. Mg(2+)-binding residues include aspartate 321, aspartate 327, glutamate 330, and aspartate 331.

The protein belongs to the phenylalanyl-tRNA synthetase beta subunit family. Type 2 subfamily. Tetramer of two alpha and two beta subunits. Requires Mg(2+) as cofactor.

Its subcellular location is the cytoplasm. The catalysed reaction is tRNA(Phe) + L-phenylalanine + ATP = L-phenylalanyl-tRNA(Phe) + AMP + diphosphate + H(+). In Saccharolobus islandicus (strain M.16.27) (Sulfolobus islandicus), this protein is Phenylalanine--tRNA ligase beta subunit.